The sequence spans 349 residues: Protein RecA (349 aa).

65 to 72 (GPESSGKT) contributes to the ATP binding site. Residues 329 to 349 (KASDQTAAHDETEEEPDLLES) form a disordered region. The span at 339-349 (ETEEEPDLLES) shows a compositional bias: acidic residues.

Belongs to the RecA family.

It is found in the cytoplasm. Its function is as follows. Can catalyze the hydrolysis of ATP in the presence of single-stranded DNA, the ATP-dependent uptake of single-stranded DNA by duplex DNA, and the ATP-dependent hybridization of homologous single-stranded DNAs. It interacts with LexA causing its activation and leading to its autocatalytic cleavage. In Acinetobacter baylyi (strain ATCC 33305 / BD413 / ADP1), this protein is Protein RecA.